The chain runs to 472 residues: UDP-N-acetylmuramate--L-alanine ligase (472 aa).

ATP is bound at residue 122–128; that stretch reads GSHGKTT.

Belongs to the MurCDEF family.

The protein localises to the cytoplasm. The catalysed reaction is UDP-N-acetyl-alpha-D-muramate + L-alanine + ATP = UDP-N-acetyl-alpha-D-muramoyl-L-alanine + ADP + phosphate + H(+). Its pathway is cell wall biogenesis; peptidoglycan biosynthesis. Functionally, cell wall formation. The chain is UDP-N-acetylmuramate--L-alanine ligase from Prochlorococcus marinus (strain SARG / CCMP1375 / SS120).